Here is a 111-residue protein sequence, read N- to C-terminus: Resistin-like beta (111 aa).

The signal sequence occupies residues 1 to 23; sequence MGPSSCLLLILIPLLQLINPGST. 5 cysteine pairs are disulfide-bonded: Cys-55-Cys-108, Cys-67-Cys-107, Cys-76-Cys-93, Cys-78-Cys-95, and Cys-82-Cys-97.

It belongs to the resistin/FIZZ family. In terms of assembly, homodimer; disulfide-linked. Expressed only in the gastrointestinal tract, particularly the colon.

It localises to the secreted. Its function is as follows. Probable hormone. The sequence is that of Resistin-like beta (RETNLB) from Homo sapiens (Human).